The primary structure comprises 617 residues: Vacuolar protein sorting-associated protein 33A (617 aa).

A disordered region spans residues 268–287 (NFPSDGALPGGGGSGPRVEE).

It belongs to the STXBP/unc-18/SEC1 family. Component of the class C core vacuole/endosome tethering (CORVET) complex composed of at least Vps8, dor/Vps18, car/Vps33A and Vps16A; unlike in other species, Vps11 is not part of the Drosophila complex. Due to the reduced number of components the Drosophila CORVET complex is often referred to as the miniCORVET complex. Interacts with ema. Component of the homotypic fusion and vacuole protein sorting (HOPS) complex, composed of Vps16A, car/Vps33A, dor/Vps18, Vps39, Vps11 and lt/Vps41. The tethering complex core made up of Vps16A, car/Vps33A and dor/Vps18 and shared by both HOPS and CORVET, preferentially associates with CORVET specific Vps8 over HOPS specific lt/Vps41. Interacts with Syx17 (via SNARE domain); the interaction requires Vps16A, may involve additional components of the HOPS complex and may promote assembly of the Syx17-Snap29-Vamp7 trans-SNARE complex.

The protein localises to the early endosome. Its subcellular location is the late endosome membrane. The protein resides in the lysosome membrane. Its function is as follows. Core component of the class C core vacuole/endosome tethering (CORVET) and the homotypic fusion and vacuole protein sorting (HOPS) tethering complexes involved in endo-lysosomal vesicle trafficking and lysosome biogenesis. The CORVET complex facilitates docking and fusion of endosomal vesicles during endosome maturation, acts upstream of HOPS, but is not involved in autophagic flux. The CORVET complex may cooperate with the early endosomal tether Rbsn-5 to mediate endosomal fusion. The HOPS complex facilitates docking and fusion of lysosomes with late endosomes and several other types of vesicles. The HOPS complex is also involved in autophagy and crinophagy (the elimination of unused secretory granules through their fusion with lysosomes). The HOPS complex probably instigates autophagosome-lysosome fusion by binding autophagosome associated Syx17/syntaxin 17 and promoting assembly of the trans-SNARE complex. Independent of Syx17/syntaxin 17 HOPS is involved in biosynthetic transport to lysosomes and lysosome-related organelles such as eye-pigment granules. Required for endocytic degradation of boss/bride of sevenless and N/Notch in developing ommatidia. In Drosophila melanogaster (Fruit fly), this protein is Vacuolar protein sorting-associated protein 33A.